We begin with the raw amino-acid sequence, 213 residues long: Orotidine 5'-phosphate decarboxylase (213 aa).

Residues aspartate 11, lysine 33, aspartate 61 to threonine 70, serine 113, proline 166 to serine 176, glycine 189, and arginine 190 contribute to the substrate site. The active-site Proton donor is lysine 63.

The protein belongs to the OMP decarboxylase family. Type 1 subfamily. Homodimer.

The catalysed reaction is orotidine 5'-phosphate + H(+) = UMP + CO2. It participates in pyrimidine metabolism; UMP biosynthesis via de novo pathway; UMP from orotate: step 2/2. Functionally, catalyzes the decarboxylation of orotidine 5'-monophosphate (OMP) to uridine 5'-monophosphate (UMP). The protein is Orotidine 5'-phosphate decarboxylase of Thermococcus kodakarensis (strain ATCC BAA-918 / JCM 12380 / KOD1) (Pyrococcus kodakaraensis (strain KOD1)).